The chain runs to 285 residues: UPF0603 protein At1g54780, chloroplastic (285 aa).

2 disordered regions span residues 1–48 (METL…LSTR) and 228–251 (GQPD…TKEE). The segment covering 22–40 (HQTKPTSHSLSLSKPTTFS) has biased composition (polar residues). A compositionally biased stretch (basic and acidic residues) spans 238–251 (KDSKRESNFKTKEE). The chain crosses the membrane as a helical span at residues 259–279 (FSLVVGGLLVIAFVVPMAQYF).

It belongs to the UPF0603 family.

The protein localises to the plastid. It is found in the chloroplast thylakoid membrane. The chain is UPF0603 protein At1g54780, chloroplastic from Arabidopsis thaliana (Mouse-ear cress).